A 200-amino-acid chain; its full sequence is ATP synthase subunit b (200 aa).

A helical membrane pass occupies residues 12-32 (ILSGLAVAVAILVPVLALASG).

It belongs to the ATPase B chain family. As to quaternary structure, F-type ATPases have 2 components, F(1) - the catalytic core - and F(0) - the membrane proton channel. F(1) has five subunits: alpha(3), beta(3), gamma(1), delta(1), epsilon(1). F(0) has three main subunits: a(1), b(2) and c(10-14). The alpha and beta chains form an alternating ring which encloses part of the gamma chain. F(1) is attached to F(0) by a central stalk formed by the gamma and epsilon chains, while a peripheral stalk is formed by the delta and b chains.

It localises to the cell inner membrane. Its function is as follows. F(1)F(0) ATP synthase produces ATP from ADP in the presence of a proton or sodium gradient. F-type ATPases consist of two structural domains, F(1) containing the extramembraneous catalytic core and F(0) containing the membrane proton channel, linked together by a central stalk and a peripheral stalk. During catalysis, ATP synthesis in the catalytic domain of F(1) is coupled via a rotary mechanism of the central stalk subunits to proton translocation. Component of the F(0) channel, it forms part of the peripheral stalk, linking F(1) to F(0). This is ATP synthase subunit b from Trichlorobacter lovleyi (strain ATCC BAA-1151 / DSM 17278 / SZ) (Geobacter lovleyi).